A 400-amino-acid polypeptide reads, in one-letter code: Golgin-45 (400 aa).

Positions 1 to 36 (MEKMTTLKSFESKGILTSTPIRGAGDGMETEEPPKS) are disordered. Residues 22–26 (RGAGD) carry the Tankyrase-binding motif motif. S53 carries the post-translational modification Phosphoserine. Positions 126 to 263 (LSEVKKVLEK…LSEREQFRQE (138 aa)) form a coiled coil. S356 carries the post-translational modification Phosphoserine. Residues 394 to 400 (QGELLAL) are essential for interaction with GORASP2.

As to quaternary structure, interacts with GORASP2. Interacts with the GTP-bound form of RAB2, but not with other Golgi Rab proteins. Identified in a complex with RAB2 and GORASP2. ADP-ribosylated by tankyrase TNKS and TNKS2. Poly-ADP-ribosylated protein is recognized by RNF146, followed by ubiquitination. Post-translationally, ubiquitinated by RNF146 when poly-ADP-ribosylated, leading to its degradation.

Its subcellular location is the golgi apparatus membrane. Its function is as follows. Required for normal Golgi structure and for protein transport from the endoplasmic reticulum (ER) through the Golgi apparatus to the cell surface. In Rattus norvegicus (Rat), this protein is Golgin-45.